Consider the following 577-residue polypeptide: Arginine--tRNA ligase (577 aa).

A 'HIGH' region motif is present at residues 122–132; it reads PNVAKEMHVGH.

Belongs to the class-I aminoacyl-tRNA synthetase family. Monomer.

It localises to the cytoplasm. It catalyses the reaction tRNA(Arg) + L-arginine + ATP = L-arginyl-tRNA(Arg) + AMP + diphosphate. The polypeptide is Arginine--tRNA ligase (Salmonella paratyphi A (strain ATCC 9150 / SARB42)).